A 354-amino-acid chain; its full sequence is Histidinol-phosphate aminotransferase (354 aa).

Lys210 is modified (N6-(pyridoxal phosphate)lysine).

The protein belongs to the class-II pyridoxal-phosphate-dependent aminotransferase family. Histidinol-phosphate aminotransferase subfamily. As to quaternary structure, homodimer. Pyridoxal 5'-phosphate is required as a cofactor.

It catalyses the reaction L-histidinol phosphate + 2-oxoglutarate = 3-(imidazol-4-yl)-2-oxopropyl phosphate + L-glutamate. It functions in the pathway amino-acid biosynthesis; L-histidine biosynthesis; L-histidine from 5-phospho-alpha-D-ribose 1-diphosphate: step 7/9. This Clostridium botulinum (strain Okra / Type B1) protein is Histidinol-phosphate aminotransferase.